The chain runs to 395 residues: MIISAASDYRAAAQRILPPFLFHYIDGGAYSEHTLRRNVEDLSEVALRQRVLKNMSDLSLETKLFNETLSMPVALAPVGLCGMYARRGEVQAAAAADARGIPFTLSTVSVCPIEEVAPTIKRPMWFQLYVLRDRGFMRNALERAKAAGCSTLVFTVDMPTPGARYRDAHSGMSGANAAMRRYWQAVTHPQWAWDVGVNGRPHDLGNISAYLGKPTGLEDYIGWLANNFDPSISWKDLEWIREFWDGPMVIKGILDPEDARDAVRFGADGIVVSNHGGRQLDGVLSSARALPAIADAVKGDIAILADSGIRNGLDVVRMIALGADSVLLGRAYLYALATHGQAGVANLLNLIEKEMKVAMTLTGAKTISEISKDSLVQELSRIPSGLAPLAQGTAA.

Positions 1–380 (MIISAASDYR…SKDSLVQELS (380 aa)) constitute an FMN hydroxy acid dehydrogenase domain. Y24 is a binding site for substrate. FMN-binding residues include S106 and Q127. Y129 contacts substrate. An FMN-binding site is contributed by T155. R164 lines the substrate pocket. Residue K251 coordinates FMN. The active-site Proton acceptor is H275. Position 278 (R278) interacts with substrate. Position 306-330 (306-330 (DSGIRNGLDVVRMIALGADSVLLGR)) interacts with FMN.

The protein belongs to the FMN-dependent alpha-hydroxy acid dehydrogenase family. The cofactor is FMN.

The protein localises to the cell inner membrane. The enzyme catalyses (S)-lactate + A = pyruvate + AH2. Functionally, catalyzes the conversion of L-lactate to pyruvate. Is coupled to the respiratory chain. This Enterobacter sp. (strain 638) protein is L-lactate dehydrogenase.